The following is a 302-amino-acid chain: RuBisCO operon transcriptional regulator (302 aa).

Residues 1-60 form the HTH lysR-type domain; sequence MHVSLRQLRVFEAVARHNSYTRAAEELHLSQPAVSMQVRQLEDEIGLSLFERLGKQVVLT. The segment at residues 20 to 39 is a DNA-binding region (H-T-H motif); the sequence is YTRAAEELHLSQPAVSMQVR.

The protein belongs to the LysR transcriptional regulatory family.

Trans-acting transcriptional regulator of RuBisCO genes (rbcAB) expression. This chain is RuBisCO operon transcriptional regulator (rbcR), found in Allochromatium vinosum (Chromatium vinosum).